The primary structure comprises 464 residues: ATP-dependent protease ATPase subunit HslU (464 aa).

Residues Val18, 60–65, Asp277, Glu342, and Arg414 each bind ATP; that span reads GVGKTE.

The protein belongs to the ClpX chaperone family. HslU subfamily. As to quaternary structure, a double ring-shaped homohexamer of HslV is capped on each side by a ring-shaped HslU homohexamer. The assembly of the HslU/HslV complex is dependent on binding of ATP.

It is found in the cytoplasm. In terms of biological role, ATPase subunit of a proteasome-like degradation complex; this subunit has chaperone activity. The binding of ATP and its subsequent hydrolysis by HslU are essential for unfolding of protein substrates subsequently hydrolyzed by HslV. HslU recognizes the N-terminal part of its protein substrates and unfolds these before they are guided to HslV for hydrolysis. The polypeptide is ATP-dependent protease ATPase subunit HslU (Lactobacillus delbrueckii subsp. bulgaricus (strain ATCC BAA-365 / Lb-18)).